The chain runs to 120 residues: Ribosome-binding factor A (120 aa).

Belongs to the RbfA family. As to quaternary structure, monomer. Binds 30S ribosomal subunits, but not 50S ribosomal subunits or 70S ribosomes.

The protein localises to the cytoplasm. In terms of biological role, one of several proteins that assist in the late maturation steps of the functional core of the 30S ribosomal subunit. Associates with free 30S ribosomal subunits (but not with 30S subunits that are part of 70S ribosomes or polysomes). Required for efficient processing of 16S rRNA. May interact with the 5'-terminal helix region of 16S rRNA. The protein is Ribosome-binding factor A of Chlamydia pneumoniae (Chlamydophila pneumoniae).